The chain runs to 405 residues: Glucose-1-phosphate adenylyltransferase (405 aa).

Residues G164, 179-180, and S197 contribute to the alpha-D-glucose 1-phosphate site; that span reads EK.

It belongs to the bacterial/plant glucose-1-phosphate adenylyltransferase family. As to quaternary structure, homotetramer.

The catalysed reaction is alpha-D-glucose 1-phosphate + ATP + H(+) = ADP-alpha-D-glucose + diphosphate. The protein operates within glycan biosynthesis; glycogen biosynthesis. In terms of biological role, involved in the biosynthesis of ADP-glucose, a building block required for the elongation reactions to produce glycogen. Catalyzes the reaction between ATP and alpha-D-glucose 1-phosphate (G1P) to produce pyrophosphate and ADP-Glc. The sequence is that of Glucose-1-phosphate adenylyltransferase from Corynebacterium jeikeium (strain K411).